The sequence spans 518 residues: MTAYKPYRHQLRRSLFASTIFPVFLVIIIGLVSFYAIYIWIEHRTIHQHVDESQSSLHHTEKQIQTFITQHNNSFQELDLTNHHDVTATKRELLKLIHQQPATLYYELSGPNQFITNNYEHLNTKNMYLFSTHQLKFKNSTYMLKIYIANTPRLSEIKKDSRQFALIVDQYDNILYANDDRFTIGEKYRPQQFGFMNESVKLNHADHRLIIYKDIHENIEDGITLLIVMAVVLVLLVIFGFISADNMAKRQTKDIETIIQKIYYAKNRHLGTYTPLKNNSELEEINNYIYDLFESNEQLIHSIEHTERRLRDIQLKEIERQFQPHFLFNTMQTIQYLITLSPKLAQTVVQQLSQMLRYSLRTNSHTVELNEELNYIEQYVAIQNIRFDDMIKLHIESSEEARHQTIGKMMLQPLIENAIKHGRDTESLDITIRLTLARQNLHVLVCDNGIGMSSSRLQYVRQSLNNDVFDTKHLGLNHLHNKAMIQYGSHARLHIFSKRNQGTLICYKIPLSRGNVDV.

2 consecutive transmembrane segments (helical) span residues 20–40 (IFPVFLVIIIGLVSFYAIYIW) and 222–242 (GITLLIVMAVVLVLLVIFGFI). Residues 297-513 (EQLIHSIEHT…LICYKIPLSR (217 aa)) enclose the Histidine kinase domain. The residue at position 325 (His325) is a Phosphohistidine; by autocatalysis.

Autophosphorylated.

It localises to the cell membrane. The enzyme catalyses ATP + protein L-histidine = ADP + protein N-phospho-L-histidine.. In terms of biological role, member of the two-component regulatory system HptS/HptR that regulates genes involved in hexose phosphate transport system in response to changes in extracellular phosphate sources. May act as a sensor protein kinase which is autophosphorylated at a histidine residue and transfers its phosphate group to the conserved aspartic acid residue in the regulatory domain of HptS. In turn, HptS antagonizes CcpA-dependent transcription of a subset of CcpA-regulated genes involved in antibiotic susceptibility. This is Sensor protein kinase HptS (hptS) from Staphylococcus aureus (strain MRSA252).